Here is a 423-residue protein sequence, read N- to C-terminus: Serine--tRNA ligase (423 aa).

231–233 (TAE) contributes to the L-serine binding site. 262–264 (RSE) lines the ATP pocket. Glutamate 285 serves as a coordination point for L-serine. Position 349–352 (349–352 (EISS)) interacts with ATP. Serine 384 contacts L-serine.

It belongs to the class-II aminoacyl-tRNA synthetase family. Type-1 seryl-tRNA synthetase subfamily. As to quaternary structure, homodimer. The tRNA molecule binds across the dimer.

The protein localises to the cytoplasm. The catalysed reaction is tRNA(Ser) + L-serine + ATP = L-seryl-tRNA(Ser) + AMP + diphosphate + H(+). It catalyses the reaction tRNA(Sec) + L-serine + ATP = L-seryl-tRNA(Sec) + AMP + diphosphate + H(+). The protein operates within aminoacyl-tRNA biosynthesis; selenocysteinyl-tRNA(Sec) biosynthesis; L-seryl-tRNA(Sec) from L-serine and tRNA(Sec): step 1/1. In terms of biological role, catalyzes the attachment of serine to tRNA(Ser). Is also able to aminoacylate tRNA(Sec) with serine, to form the misacylated tRNA L-seryl-tRNA(Sec), which will be further converted into selenocysteinyl-tRNA(Sec). The sequence is that of Serine--tRNA ligase from Lactococcus lactis subsp. cremoris (strain MG1363).